Consider the following 1088-residue polypeptide: MEEISDPKPNALEQVLPTVPNGKCTAPVQMESLAVDVQKVSGEAKVRICSCWCEIVRSPEDLTKLVPCNDFAEDIKLFDSDPMQQEAESSIGIPLIPKQVTMSHNHDHESGSEMVSNEVMQENHVIATENTYQKSDFDRINMGQKETMPEEVIHKSFLESSTSSIDILLNNHNSYQSGLPPENAVTDCKQVQLGHRSDDAIKNSGLVELVIGQKNVAKSPSQLVETGKRGRGRPRKVQTGLEQLVIGQKTAAKSSSQLGDTGKRSRGRPRKVQNSPTSFLENINMEQKETIPEQVTQNSILESLTIPTDNQSRTYNSDQSELPPENAAKNCNHAQFGHQSDDTTKISGFKELVIGQETVAKSPSQLVDAGKRGRGRPRKVQTGLEQLVPVQETAAKSSSQLGDTGKRSRGRPRKVQDSPTSLGGNVKVVPEKGKDSQELSVNSSRSLRSRSQEKSIEPDVNNIVADEGADREKPRKKRKKRMEENRVDEFCRIRTHLRYLLHRIKYEKNFLDAYSGEGWKGQSLDKIKPEKELKRAKAEIFGRKLKIRDLFQRLDLARSEGRLPEILFDSRGEIDSEDIFCAKCGSKDVTLSNDIILCDGACDRGFHQFCLDPPLLKEYIPPDDEGWLCPGCECKIDCIKLLNDSQETNILLGDSWEKVFAEEAAAAASGKNLDDNSGLPSDDSEDDDYDPGGPDLDEKVQGDDSSTDESDYQSESDDMQVIRQKNSRGLPSDDSEDDEYDPSGLVTDQMYKDSSCSDFTSDSEDFTGVFDDYKDTGKAQGPLASTPDHVRNNEEGCGHPEQGDTAPLYPRRQVESLDYKKLNDIEFSKMCDILDILSSQLDVIICTGNQEEYGNTSSDSSDEDYMVTSSPDKNNSDKEATAMERGRESGDLELDQKARESTHNRRYIKKFAVEGTDSFLSRSCEDSAAPVAGSKSTSKTLHGEHATQRLLQSFKENQYPQRAVKESLAAELALSVRQVSNWFNNRRWSFRHSSRIGSDVAKFDSNDTPRQKSIDMSGPSLKSVLDSATYSEIEKKEQDTASLGLTEGCDRYMTLNMVADEGNVHTPCIAETREEKTEVGIKPQQNPL.

Tandem repeats lie at residues 140-152, 173-199, 205-239, 240-274, 283-295, 316-342, 348-382, and 383-417. A 2 X 13 AA repeats region spans residues 140 to 295; it reads INMGQKETMP…EQKETIPEQV (156 aa). Positions 173-342 are 2 X 27 AA approximate repeats; the sequence is NSYQSGLPPE…HAQFGHQSDD (170 aa). Positions 205–274 are 2 X 35 AA approximate tandem repeats (type C); sequence GLVELVIGQK…SRGRPRKVQN (70 aa). Residues 220 to 282 form a disordered region; the sequence is PSQLVETGKR…QNSPTSFLEN (63 aa). 2 consecutive DNA-binding regions (a.T hook) follow at residues 226–236 and 261–271; these read TGKRGRGRPRK and TGKRSRGRPRK. A compositionally biased stretch (polar residues) spans 272 to 282; sequence VQNSPTSFLEN. A compositionally biased stretch (polar residues) spans 303-320; sequence SLTIPTDNQSRTYNSDQS. 2 disordered regions span residues 303 to 343 and 363 to 484; these read SLTI…SDDT and PSQL…RMEE. The tract at residues 348–417 is 2 X 35 AA approximate tandem repeats (type C); the sequence is GFKELVIGQE…SRGRPRKVQD (70 aa). DNA-binding regions (a.T hook) lie at residues 369-379 and 404-414; these read AGKRGRGRPRK and TGKRSRGRPRK. The PHD-type zinc finger occupies 578 to 635; the sequence is DIFCAKCGSKDVTLSNDIILCDGACDRGFHQFCLDPPLLKEYIPPDDEGWLCPGCECK. Disordered stretches follow at residues 667–810 and 851–901; these read AASG…PLYP and EEYG…ARES. A 4-1 repeat occupies 678 to 693; the sequence is GLPSDDSEDDDYDPGG. The tract at residues 678–744 is 2 X 16 AA Asp/Glu-rich (acidic) repeats; the sequence is GLPSDDSEDD…SEDDEYDPSG (67 aa). Acidic residues predominate over residues 705-718; that stretch reads SSTDESDYQSESDD. The stretch at 729-744 is one 4-2 repeat; that stretch reads GLPSDDSEDDEYDPSG. Basic and acidic residues-rich tracts occupy residues 788–802 and 874–901; these read DHVR…HPEQ and NNSD…ARES. A DNA-binding region (homeobox) is located at residues 935-994; the sequence is KSTSKTLHGEHATQRLLQSFKENQYPQRAVKESLAAELALSVRQVSNWFNNRRWSFRHSS.

It belongs to the PHD-associated homeobox family.

The protein localises to the nucleus. In terms of biological role, specifically binds to the fungal elicitor-responsive DNA element, 5'-CTAATTGTTTA-3', of the gene PR2 promoter. This Petroselinum crispum (Parsley) protein is Pathogenesis-related homeodomain protein (PRH).